Here is a 413-residue protein sequence, read N- to C-terminus: Serine hydroxymethyltransferase (413 aa).

(6S)-5,6,7,8-tetrahydrofolate is bound by residues Leu117 and Gly121 to Leu123. Lys226 bears the N6-(pyridoxal phosphate)lysine mark. Residues Glu239 and Ser349–Phe351 contribute to the (6S)-5,6,7,8-tetrahydrofolate site.

It belongs to the SHMT family. In terms of assembly, homodimer. Pyridoxal 5'-phosphate is required as a cofactor.

It localises to the cytoplasm. The catalysed reaction is (6R)-5,10-methylene-5,6,7,8-tetrahydrofolate + glycine + H2O = (6S)-5,6,7,8-tetrahydrofolate + L-serine. It functions in the pathway one-carbon metabolism; tetrahydrofolate interconversion. It participates in amino-acid biosynthesis; glycine biosynthesis; glycine from L-serine: step 1/1. Functionally, catalyzes the reversible interconversion of serine and glycine with tetrahydrofolate (THF) serving as the one-carbon carrier. This reaction serves as the major source of one-carbon groups required for the biosynthesis of purines, thymidylate, methionine, and other important biomolecules. Also exhibits THF-independent aldolase activity toward beta-hydroxyamino acids, producing glycine and aldehydes, via a retro-aldol mechanism. This is Serine hydroxymethyltransferase from Bacillus anthracis (strain A0248).